Consider the following 453-residue polypeptide: GTPase Der (453 aa).

EngA-type G domains are found at residues 3–178 (PKIA…PNNE) and 190–363 (LKLA…LECS). GTP-binding positions include 9–16 (GRPNVGKS), 57–61 (DTGGV), 130–133 (NKVD), 196–203 (GRPNAGKS), 243–247 (DTAGI), and 308–311 (NKTD). Residues 364 to 448 (TRINTGVLNR…PIRIRLRSSH (85 aa)) enclose the KH-like domain.

Belongs to the TRAFAC class TrmE-Era-EngA-EngB-Septin-like GTPase superfamily. EngA (Der) GTPase family. Associates with the 50S ribosomal subunit.

In terms of biological role, GTPase that plays an essential role in the late steps of ribosome biogenesis. The polypeptide is GTPase Der (Lawsonia intracellularis (strain PHE/MN1-00)).